The chain runs to 174 residues: Male-enhanced antigen 1 (174 aa).

Disordered stretches follow at residues 1–83 and 95–123; these read MAAV…DGAA and HLPD…IPMD. Acidic residues-rich tracts occupy residues 38 to 48, 65 to 82, and 101 to 110; these read SSEEPEEEQEE, PEQE…EDGA, and LESEDEDEEG. S103 carries the post-translational modification Phosphoserine.

As to expression, highly expressed in testis. Transcripts can be found in primary and secondary spermatocytes, and spermatids, but the protein itself is only detected in spermatids. No expression in Leydig cells, spermatogonia, or sperm. Very weak expression in the heart, kidney, spleen, thymus and ovary.

May play an important role in spermatogenesis and/or testis development. This chain is Male-enhanced antigen 1 (Mea1), found in Mus musculus (Mouse).